Here is a 67-residue protein sequence, read N- to C-terminus: Small ribosomal subunit protein bS21 (67 aa).

This sequence belongs to the bacterial ribosomal protein bS21 family.

In Oleidesulfovibrio alaskensis (strain ATCC BAA-1058 / DSM 17464 / G20) (Desulfovibrio alaskensis), this protein is Small ribosomal subunit protein bS21.